The sequence spans 31 residues: Acetyl-CoA carboxylase (31 aa).

The segment at 1–31 is disordered; the sequence is RISSSVIAHKTQLDSGKREVYSSHMQLGGPK. The span at 11–21 shows a compositional bias: basic and acidic residues; the sequence is TQLDSGKREVY.

It carries out the reaction hydrogencarbonate + acetyl-CoA + ATP = malonyl-CoA + ADP + phosphate + H(+). Its pathway is lipid metabolism; malonyl-CoA biosynthesis; malonyl-CoA from acetyl-CoA: step 1/1. The sequence is that of Acetyl-CoA carboxylase from Catharanthus roseus (Madagascar periwinkle).